Consider the following 729-residue polypeptide: Fibroblast growth factor receptor homolog 1 (729 aa).

A signal peptide spans 1–36 (MAAAWSWRASHSTITMTSGSLVVLFLLLSIWQPAVQ). The Extracellular segment spans residues 37–309 (VEGRRQMANS…VASGSLHSTS (273 aa)). A disordered region spans residues 56-101 (ARSQNKTPAITNNANQSSTSSADLDDGAADDDDNKADLPVNVSSKP). Over residues 66 to 77 (TNNANQSSTSSA) the composition is skewed to low complexity. The N-linked (GlcNAc...) asparagine glycan is linked to Asn-70. Acidic residues predominate over residues 78-89 (DLDDGAADDDDN). N-linked (GlcNAc...) asparagine glycans are attached at residues Asn-96, Asn-134, Asn-140, Asn-171, Asn-207, Asn-213, Asn-242, Asn-246, and Asn-282. Ig-like C2-type domains lie at 106–192 (PKKM…VIVS) and 203–279 (TGPL…NSLG). An intrachain disulfide couples Cys-125 to Cys-174. A disulfide bridge connects residues Cys-220 and Cys-272. Residues 310 to 330 (FVYIFVFGGLIFIFMTTLFVF) form a helical membrane-spanning segment. Residues 331 to 729 (YAIRKMKHEK…TDNLQKWCNY (399 aa)) are Cytoplasmic-facing. The 277-residue stretch at 416-692 (LVLGATLGEG…EIVEYMDKLL (277 aa)) folds into the Protein kinase domain. Residues 422–430 (LGEGAFGRV) and Lys-443 contribute to the ATP site. The Proton acceptor role is filled by Asp-556. Tyr-587 is subject to Phosphotyrosine; by autocatalysis.

The protein belongs to the protein kinase superfamily. Tyr protein kinase family. Fibroblast growth factor receptor subfamily. As to expression, in early embryos, expression is specific to mesodermal primordium and invaginated mesodermal cells. At later stages, expression is seen in putative muscle precursor cells and in the CNS.

The protein localises to the membrane. It carries out the reaction L-tyrosyl-[protein] + ATP = O-phospho-L-tyrosyl-[protein] + ADP + H(+). Functionally, may be required for patterning of muscle precursor cells. May be essential for generation of mesodermal and endodermal layers, invaginations of various types of cells and CNS formation. The sequence is that of Fibroblast growth factor receptor homolog 1 (htl) from Drosophila melanogaster (Fruit fly).